A 148-amino-acid polypeptide reads, in one-letter code: SsrA-binding protein (148 aa).

Belongs to the SmpB family.

It is found in the cytoplasm. In terms of biological role, required for rescue of stalled ribosomes mediated by trans-translation. Binds to transfer-messenger RNA (tmRNA), required for stable association of tmRNA with ribosomes. tmRNA and SmpB together mimic tRNA shape, replacing the anticodon stem-loop with SmpB. tmRNA is encoded by the ssrA gene; the 2 termini fold to resemble tRNA(Ala) and it encodes a 'tag peptide', a short internal open reading frame. During trans-translation Ala-aminoacylated tmRNA acts like a tRNA, entering the A-site of stalled ribosomes, displacing the stalled mRNA. The ribosome then switches to translate the ORF on the tmRNA; the nascent peptide is terminated with the 'tag peptide' encoded by the tmRNA and targeted for degradation. The ribosome is freed to recommence translation, which seems to be the essential function of trans-translation. The sequence is that of SsrA-binding protein from Ehrlichia ruminantium (strain Gardel).